The chain runs to 94 residues: PqqA binding protein (94 aa).

Belongs to the PqqD family. Monomer. Interacts with PqqE.

The protein operates within cofactor biosynthesis; pyrroloquinoline quinone biosynthesis. In terms of biological role, functions as a PqqA binding protein and presents PqqA to PqqE, in the pyrroloquinoline quinone (PQQ) biosynthetic pathway. The protein is PqqA binding protein of Acinetobacter baumannii (strain AB307-0294).